We begin with the raw amino-acid sequence, 190 residues long: Elongation factor P-like protein (190 aa).

This sequence belongs to the elongation factor P family.

In Edwardsiella ictaluri (strain 93-146), this protein is Elongation factor P-like protein.